The sequence spans 722 residues: Probable dipeptidyl-peptidase 5 (722 aa).

An N-terminal signal peptide occupies residues 1–18 (MGALRWLSLAAAASSALA). N-linked (GlcNAc...) asparagine glycans are attached at residues N75, N78, N86, N94, N151, N253, and N448. S558 (charge relay system) is an active-site residue. An N-linked (GlcNAc...) asparagine glycan is attached at N605. Residues D641 and H673 each act as charge relay system in the active site.

Belongs to the peptidase S9C family.

The protein resides in the secreted. Extracellular dipeptidyl-peptidase which removes N-terminal dipeptides sequentially from polypeptides having unsubstituted N-termini. This is Probable dipeptidyl-peptidase 5 (dpp5) from Emericella nidulans (strain FGSC A4 / ATCC 38163 / CBS 112.46 / NRRL 194 / M139) (Aspergillus nidulans).